A 475-amino-acid polypeptide reads, in one-letter code: 23S rRNA (uracil(1939)-C(5))-methyltransferase RlmD (475 aa).

A compositionally biased stretch (basic residues) spans 1 to 10 (MAMLGKRRPP). Residues 1–33 (MAMLGKRRPPRTANERVRRERGSATRRDDATAD) form a disordered region. The span at 13-30 (ANERVRRERGSATRRDDA) shows a compositional bias: basic and acidic residues. A TRAM domain is found at 26-85 (RRDDATADGLSIERLAHDGRGVARDPHGKTVFVDQALPGERVRVAVHRQRKRFDEAHVVE). Residues Cys-98, Cys-104, Cys-107, and Cys-183 each contribute to the [4Fe-4S] cluster site. S-adenosyl-L-methionine-binding residues include Gln-294, Phe-323, Asn-328, Glu-344, Asp-371, and Asp-388. The Nucleophile role is filled by Cys-414. The segment at 455–475 (TRDTPRGRSTSVEREDHGQGP) is disordered. Over residues 457 to 475 (DTPRGRSTSVEREDHGQGP) the composition is skewed to basic and acidic residues.

It belongs to the class I-like SAM-binding methyltransferase superfamily. RNA M5U methyltransferase family. RlmD subfamily.

It carries out the reaction uridine(1939) in 23S rRNA + S-adenosyl-L-methionine = 5-methyluridine(1939) in 23S rRNA + S-adenosyl-L-homocysteine + H(+). In terms of biological role, catalyzes the formation of 5-methyl-uridine at position 1939 (m5U1939) in 23S rRNA. This chain is 23S rRNA (uracil(1939)-C(5))-methyltransferase RlmD, found in Chromohalobacter salexigens (strain ATCC BAA-138 / DSM 3043 / CIP 106854 / NCIMB 13768 / 1H11).